The following is a 314-amino-acid chain: S-methyl-5'-thioadenosine phosphorylase (314 aa).

Phosphate is bound by residues S31, 73–74, and 106–107; these read RH and SA. Residue M207 participates in substrate binding. Residue T208 participates in phosphate binding. 231–233 is a binding site for substrate; the sequence is DYD.

This sequence belongs to the PNP/MTAP phosphorylase family. MTAP subfamily. Homohexamer. Dimer of a homotrimer.

The enzyme catalyses S-methyl-5'-thioadenosine + phosphate = 5-(methylsulfanyl)-alpha-D-ribose 1-phosphate + adenine. It participates in amino-acid biosynthesis; L-methionine biosynthesis via salvage pathway; S-methyl-5-thio-alpha-D-ribose 1-phosphate from S-methyl-5'-thioadenosine (phosphorylase route): step 1/1. Its function is as follows. Catalyzes the reversible phosphorylation of S-methyl-5'-thioadenosine (MTA) to adenine and 5-methylthioribose-1-phosphate. Involved in the breakdown of MTA, a major by-product of polyamine biosynthesis. Responsible for the first step in the methionine salvage pathway after MTA has been generated from S-adenosylmethionine. Has broad substrate specificity with 6-aminopurine nucleosides as preferred substrates. In Prochlorococcus marinus (strain SARG / CCMP1375 / SS120), this protein is S-methyl-5'-thioadenosine phosphorylase.